A 508-amino-acid chain; its full sequence is Early growth response protein 1 (508 aa).

Disordered regions lie at residues 18–78 (PQFL…ESFS) and 136–210 (MTNP…QYPP). A compositionally biased stretch (low complexity) spans 33–42 (NNSSSSSSSS). A compositionally biased stretch (gly residues) spans 43–52 (SGGGGGGGSN). The span at 139-164 (PPTSSSSAPSPAASSSSSASQSPPLS) shows a compositional bias: low complexity. A Glycyl lysine isopeptide (Lys-Gly) (interchain with G-Cter in SUMO2) cross-link involves residue Lys-278. The disordered stretch occupies residues 292–311 (SRMRKYPNRPSKTPPHERPY). C2H2-type zinc fingers lie at residues 311–335 (YACPVESCDRRFSRSDELTRHIRIH), 341–363 (FQCRICMRNFSRSDHLTTHIRTH), and 369–391 (FACDICGRKFARSDERKRHTKIH). A disordered region spans residues 382 to 453 (DERKRHTKIH…SSTYPSPAHS (72 aa)). The segment covering 386-396 (RHTKIHLRQKD) has biased composition (basic residues). Positions 402–450 (SVVASSAASSLSSYPSPVATSYPSPATTSFPSPVPTSYSSPGSSTYPSP) are enriched in low complexity. A run of 7 repeats spans residues 413-420 (SSYPSPVA), 421-428 (TSYPSPAT), 429-436 (TSFPSPVP), 437-444 (TSYSSPGS), 445-452 (STYPSPAH), 453-460 (SGFPSPSV), and 462-468 (TTYASVP). The tract at residues 413–468 (SSYPSPVATSYPSPATTSFPSPVPTSYSSPGSSTYPSPAHSGFPSPSVATTYASVP) is 7 X 8 AA tandem repeats of [TS](2)-[FY]-[PS]-S-P-[GSAV]-X.

This sequence belongs to the EGR C2H2-type zinc-finger protein family. In terms of assembly, interacts with SNAI1 and SP1 upon 12-O-tetradecanoylphorbol-13-acetate (TPA) induction. As to expression, detected in kidney thick ascending limbs and collecting ducts (at protein level).

It is found in the nucleus. Its subcellular location is the cytoplasm. In terms of biological role, transcriptional regulator. Recognizes and binds to the DNA sequence 5'-GCG(T/G)GGGCG-3'(EGR-site) in the promoter region of target genes. Binds double-stranded target DNA, irrespective of the cytosine methylation status. Regulates the transcription of numerous target genes, and thereby plays an important role in regulating the response to growth factors, DNA damage, and ischemia. Plays a role in the regulation of cell survival, proliferation and cell death. Activates expression of p53/TP53 and TGFB1, and thereby helps prevent tumor formation. Required for normal progress through mitosis and normal proliferation of hepatocytes after partial hepatectomy. Mediates responses to ischemia and hypoxia; regulates the expression of proteins such as IL1B and CXCL2 that are involved in inflammatory processes and development of tissue damage after ischemia. Regulates biosynthesis of luteinizing hormone (LHB) in the pituitary. Regulates the amplitude of the expression rhythms of clock genes: BMAL1, PER2 and NR1D1 in the liver via the activation of PER1 (clock repressor) transcription. Regulates the rhythmic expression of core-clock gene BMAL1 in the suprachiasmatic nucleus (SCN). Regulates biosynthesis of glucocorticoid receptor GR/NR3C1 in the hippocampus and thereby may play a role in the behavioral and hypothalamic-pituitary-adrenal responses to stress in offspring. This Rattus norvegicus (Rat) protein is Early growth response protein 1 (Egr1).